Here is a 640-residue protein sequence, read N- to C-terminus: Probable potassium transport system protein Kup 2 (640 aa).

The next 12 helical transmembrane spans lie at 19–39 (LFSS…YGDI), 67–87 (VLSL…VVFV), 118–138 (GVVA…GVIT), 155–175 (EAAK…LFLV), 181–201 (GVIG…IAAL), 230–250 (FVGV…EALY), 265–285 (WLGL…ALLL), 307–327 (MVCL…SGVF), 355–375 (VYIP…VLVF), 384–404 (AYGI…FFVI), 415–435 (AVPL…ANLF), and 437–457 (IFDG…SMIT).

It belongs to the HAK/KUP transporter (TC 2.A.72) family.

It localises to the cell inner membrane. It carries out the reaction K(+)(in) + H(+)(in) = K(+)(out) + H(+)(out). Transport of potassium into the cell. Likely operates as a K(+):H(+) symporter. The protein is Probable potassium transport system protein Kup 2 of Syntrophobacter fumaroxidans (strain DSM 10017 / MPOB).